The chain runs to 365 residues: Outer membrane protein assembly factor BamC (365 aa).

Positions 1-16 are cleaved as a signal peptide; the sequence is MLKKVTPLFLVAAVAA. Residue Cys-17 is the site of N-palmitoyl cysteine attachment. Residue Cys-17 is the site of S-diacylglycerol cysteine attachment.

Belongs to the BamC family. Part of the Bam complex.

It localises to the cell outer membrane. Functionally, part of the outer membrane protein assembly complex, which is involved in assembly and insertion of beta-barrel proteins into the outer membrane. The chain is Outer membrane protein assembly factor BamC from Shewanella oneidensis (strain ATCC 700550 / JCM 31522 / CIP 106686 / LMG 19005 / NCIMB 14063 / MR-1).